A 493-amino-acid polypeptide reads, in one-letter code: 3-octaprenyl-4-hydroxybenzoate carboxy-lyase (493 aa).

A Mn(2+)-binding site is contributed by N172. Prenylated FMN contacts are provided by residues 175 to 177 (IYR), 189 to 191 (RWL), and 194 to 195 (RG). E238 contributes to the Mn(2+) binding site. Catalysis depends on D287, which acts as the Proton donor.

This sequence belongs to the UbiD family. As to quaternary structure, homohexamer. Requires prenylated FMN as cofactor. The cofactor is Mn(2+).

The protein resides in the cell membrane. It carries out the reaction a 4-hydroxy-3-(all-trans-polyprenyl)benzoate + H(+) = a 2-(all-trans-polyprenyl)phenol + CO2. It participates in cofactor biosynthesis; ubiquinone biosynthesis. Catalyzes the decarboxylation of 3-octaprenyl-4-hydroxy benzoate to 2-octaprenylphenol, an intermediate step in ubiquinone biosynthesis. The sequence is that of 3-octaprenyl-4-hydroxybenzoate carboxy-lyase from Shewanella denitrificans (strain OS217 / ATCC BAA-1090 / DSM 15013).